Reading from the N-terminus, the 274-residue chain is Trypsin-1 (274 aa).

An N-terminal signal peptide occupies residues M1–C18. A propeptide spans A19 to R47 (activation peptide). A Peptidase S1 domain is found at I48 to G273. Residues C73 and C89 are joined by a disulfide bond. Catalysis depends on charge relay system residues H88 and D133. 2 disulfides stabilise this stretch: C198-C214 and C225-C249. S229 serves as the catalytic Charge relay system.

Belongs to the peptidase S1 family. As to expression, constitutively expressed at low level in the gut of adult females. Also expressed in the gut of male and female pupae.

Its subcellular location is the secreted. The enzyme catalyses Preferential cleavage: Arg-|-Xaa, Lys-|-Xaa.. In terms of biological role, major function may be to aid in digestion of the blood meal. This chain is Trypsin-1 (TRYP1), found in Anopheles gambiae (African malaria mosquito).